Reading from the N-terminus, the 460-residue chain is tRNA (guanine(10)-N(2))-methyltransferase TRMT11 (460 aa).

Ala-2 is subject to N-acetylalanine.

It belongs to the class I-like SAM-binding methyltransferase superfamily. TRM11 methyltransferase family. In terms of assembly, part of the heterodimeric TRMT11-TRM112 methyltransferase complex; this complex forms an active tRNA methyltransferase, where TRMT112 acts as an activator of the catalytic subunit TRMT11.

The protein resides in the cytoplasm. It carries out the reaction guanosine(10) in tRNA + S-adenosyl-L-methionine = N(2)-methylguanosine(10) in tRNA + S-adenosyl-L-homocysteine + H(+). In terms of biological role, catalytic subunit of the TRMT11-TRM112 methyltransferase complex, that specifically mediates the S-adenosyl-L-methionine-dependent N(2)-methylation of guanosine nucleotide at position 10 (m2G10) in tRNAs. This is one of the major tRNA (guanine-N(2))-methyltransferases. The polypeptide is tRNA (guanine(10)-N(2))-methyltransferase TRMT11 (Mus musculus (Mouse)).